The primary structure comprises 744 residues: Phosphoribosylformylglycinamidine synthase subunit PurL (744 aa).

The active site involves His-50. Tyr-53 and Lys-92 together coordinate ATP. Glu-94 contacts Mg(2+). Substrate-binding positions include 95 to 98 (SHNH) and Arg-117. His-96 functions as the Proton acceptor in the catalytic mechanism. Asp-118 contributes to the Mg(2+) binding site. Gln-241 is a binding site for substrate. Residue Asp-269 coordinates Mg(2+). 313–315 (ESQ) contacts substrate. Residues Asp-494 and Gly-531 each coordinate ATP. Position 532 (Asn-532) interacts with Mg(2+). Substrate is bound at residue Ser-534.

The protein belongs to the FGAMS family. As to quaternary structure, monomer. Part of the FGAM synthase complex composed of 1 PurL, 1 PurQ and 2 PurS subunits.

The protein resides in the cytoplasm. The catalysed reaction is N(2)-formyl-N(1)-(5-phospho-beta-D-ribosyl)glycinamide + L-glutamine + ATP + H2O = 2-formamido-N(1)-(5-O-phospho-beta-D-ribosyl)acetamidine + L-glutamate + ADP + phosphate + H(+). Its pathway is purine metabolism; IMP biosynthesis via de novo pathway; 5-amino-1-(5-phospho-D-ribosyl)imidazole from N(2)-formyl-N(1)-(5-phospho-D-ribosyl)glycinamide: step 1/2. Functionally, part of the phosphoribosylformylglycinamidine synthase complex involved in the purines biosynthetic pathway. Catalyzes the ATP-dependent conversion of formylglycinamide ribonucleotide (FGAR) and glutamine to yield formylglycinamidine ribonucleotide (FGAM) and glutamate. The FGAM synthase complex is composed of three subunits. PurQ produces an ammonia molecule by converting glutamine to glutamate. PurL transfers the ammonia molecule to FGAR to form FGAM in an ATP-dependent manner. PurS interacts with PurQ and PurL and is thought to assist in the transfer of the ammonia molecule from PurQ to PurL. The chain is Phosphoribosylformylglycinamidine synthase subunit PurL from Chelativorans sp. (strain BNC1).